Here is an 89-residue protein sequence, read N- to C-terminus: Large ribosomal subunit protein eL34 (89 aa).

Residues 1 to 22 (MPAPRYKSGSSKKVYRKAPGNS) are disordered.

Belongs to the eukaryotic ribosomal protein eL34 family.

The chain is Large ribosomal subunit protein eL34 from Methanococcus maripaludis (strain C5 / ATCC BAA-1333).